The primary structure comprises 112 residues: Nucleoid-associated protein FTN_1196 (112 aa).

A disordered region spans residues methionine 1 to glutamate 27. Over residues glutamate 17–glutamate 27 the composition is skewed to basic and acidic residues.

It belongs to the YbaB/EbfC family. As to quaternary structure, homodimer.

It is found in the cytoplasm. The protein resides in the nucleoid. Functionally, binds to DNA and alters its conformation. May be involved in regulation of gene expression, nucleoid organization and DNA protection. The chain is Nucleoid-associated protein FTN_1196 from Francisella tularensis subsp. novicida (strain U112).